The chain runs to 202 residues: Peptide methionine sulfoxide reductase B1, chloroplastic (202 aa).

A chloroplast-targeting transit peptide spans 1–63; the sequence is MASSTRLTII…SSSPKPDNVQ (63 aa). The tract at residues 48 to 67 is disordered; sequence YSMGSSSSSPKPDNVQEAEK. A MsrB domain is found at 75–197; it reads ENEWKKRLTP…NSAALKLNAL (123 aa). Zn(2+) is bound by residues cysteine 114, cysteine 117, cysteine 163, and cysteine 166. Cysteine 186 (nucleophile) is an active-site residue.

This sequence belongs to the MsrB Met sulfoxide reductase family. Requires Zn(2+) as cofactor. In terms of tissue distribution, expressed at low levels in stems, leaves, floral buds, flowers and siliques (at protein level).

It is found in the plastid. Its subcellular location is the chloroplast. It catalyses the reaction L-methionyl-[protein] + [thioredoxin]-disulfide + H2O = L-methionyl-(R)-S-oxide-[protein] + [thioredoxin]-dithiol. Functionally, catalyzes the reduction of methionine sulfoxide (MetSO) to methionine in proteins. Specifically reduces the MetSO R-enantiomer. Plays a protective role against oxidative stress by restoring activity to proteins that have been inactivated by methionine oxidation. May play an essential function in association with MSRB2 in maintaining vegetative growth during environmental constraints, through the preservation of photosynthetic antennae. MSRB1 and MSRB2 account for most of the leaf peptide MSR capacity. The protein is Peptide methionine sulfoxide reductase B1, chloroplastic of Arabidopsis thaliana (Mouse-ear cress).